A 447-amino-acid chain; its full sequence is Probable ethanolamine kinase B (447 aa).

Residues 178 to 208 (STTISTSTSTSTSTSSTSPSTSPSLENSTLS) are compositionally biased toward low complexity. Residues 178–217 (STTISTSTSTSTSTSSTSPSTSPSLENSTLSPRNMNTQTS) form a disordered region.

Belongs to the choline/ethanolamine kinase family.

The protein localises to the cytoplasm. It catalyses the reaction ethanolamine + ATP = phosphoethanolamine + ADP + H(+). It participates in phospholipid metabolism; phosphatidylethanolamine biosynthesis; phosphatidylethanolamine from ethanolamine: step 1/3. In terms of biological role, highly specific for ethanolamine phosphorylation. May be a rate-controlling step in phosphatidylethanolamine biosynthesis. This Dictyostelium discoideum (Social amoeba) protein is Probable ethanolamine kinase B (etnkB).